We begin with the raw amino-acid sequence, 1482 residues long: Cystic fibrosis transmembrane conductance regulator (1482 aa).

Residues 1 to 77 lie on the Cytoplasmic side of the membrane; the sequence is MQRSPLEKAS…KLINALRRCF (77 aa). The chain crosses the membrane as a helical span at residues 78–98; sequence FWRFMFYGILLYLGEVTKAVQ. The 285-residue stretch at 81 to 365 folds into the ABC transmembrane type-1 1 domain; the sequence is FMFYGILLYL…WAVQTWYDSL (285 aa). Residues 99 to 122 are Extracellular-facing; the sequence is PLLLGRIIASYDPDNKVERSIAIY. Residues 123–146 form a helical membrane-spanning segment; it reads LGIGLCLLFIVRTLLLHPAIFGLH. Residues 147–195 lie on the Cytoplasmic side of the membrane; it reads HIGMQMRIAMFSLIYKKILKLSSRVLDKISIGQLVSLLSNNLNKFDEGL. Residues 196–216 traverse the membrane as a helical segment; it reads ALAHFVWIAPLQVTLLMGLLW. Residues 217–222 lie on the Extracellular side of the membrane; it reads ELLQAS. A helical membrane pass occupies residues 223–243; sequence AFCGLGFLIVLALVQAGLGRM. At 244–298 the chain is on the cytoplasmic side; that stretch reads MMKYRDQRAGKINERLVITSEMIENIQSVKAYCWEEAMEKMIENLRQTELKLTRK. Residues 299–319 form a helical membrane-spanning segment; that stretch reads AAYVRYFNSSAFFFSGFFVVF. The Extracellular segment spans residues 320–339; sequence LSVLPYALIKGIILRKIFTT. The helical transmembrane segment at 340–358 threads the bilayer; it reads ISFCIVLRMAVTRQFPWAV. The Cytoplasmic portion of the chain corresponds to 359-859; the sequence is QTWYDSLGAI…YLRYLAVNKS (501 aa). Residues Trp401, 458 to 465, and Gln493 each bind ATP; that span reads GSTGAGKT. In terms of domain architecture, ABC transporter 1 spans 423-646; it reads NGDNSLFFSN…RPDFSSKLMG (224 aa). Cys524 carries S-palmitoyl cysteine lipidation. Phosphoserine is present on residues Ser549 and Ser660. Residues 654 to 832 form a disordered R region region; that stretch reads SAERRNSILT…EEINEEYLKE (179 aa). The residue at position 670 (Ser670) is a Phosphoserine; by PKA. Ser686 is modified (phosphoserine). Lys688 is covalently cross-linked (Glycyl lysine isopeptide (Lys-Gly) (interchain with G-Cter in ubiquitin)). Phosphoserine is present on residues Ser700 and Ser712. Position 717 is a phosphothreonine (Thr717). Phosphoserine occurs at positions 738, 769, 791, 796, and 814. The chain crosses the membrane as a helical span at residues 860-880; sequence LSLVLIWCLVIFLAEVAISLA. Positions 860 to 1156 constitute an ABC transmembrane type-1 2 domain; that stretch reads LSLVLIWCLV…AVNSSIDVDS (297 aa). The Extracellular segment spans residues 881–919; the sequence is VLLLLDKSPRYSKGNGTASGNGSSAVIITSTSSYYLFYI. N-linked (GlcNAc...) asparagine glycosylation is found at Asn895 and Asn901. A discontinuously helical transmembrane segment spans residues 920–940; that stretch reads YVGVADTLLALGFFRGLPLVH. Residues 941 to 991 lie on the Cytoplasmic side of the membrane; sequence TLITVSKILHHRMLHSVLRAPMSTLNMLKAGGILNRFSKDIAILDDLLPLT. The helical transmembrane segment at 992–1012 threads the bilayer; the sequence is IFDFVQLLLIVIGAVAVVSVL. The Extracellular segment spans residues 1013–1014; it reads QP. The helical transmembrane segment at 1015-1035 threads the bilayer; that stretch reads YIFLATVPVIAAFVILRGYFL. The Cytoplasmic segment spans residues 1036 to 1096; the sequence is HTSQQLKQLE…TANWFLYLST (61 aa). A helical transmembrane segment spans residues 1097–1117; the sequence is LRWFQMRIEMIFVVFFIAVTF. At 1118–1131 the chain is on the extracellular side; that stretch reads ISILTTGEGEGTVG. The chain crosses the membrane as a helical span at residues 1132 to 1152; sequence IILTLAMNIMGTLQWAVNSSI. Topologically, residues 1153–1482 are cytoplasmic; that stretch reads DVDSLMRSVS…TEEEVQETRL (330 aa). One can recognise an ABC transporter 2 domain in the interval 1212–1445; the sequence is MTVKDLTARY…KSLFRQAISP (234 aa). ATP contacts are provided by residues Tyr1221 and 1246-1253; that span reads GRTGAGKS. The interaction with GORASP2 stretch occupies residues 1388–1482; sequence RTLKQAFADC…TEEEVQETRL (95 aa). A lipid anchor (S-palmitoyl cysteine) is attached at Cys1397. Phosphoserine occurs at positions 1446 and 1458. A disordered region spans residues 1450 to 1482; sequence KLFPRRNSSKHKSRSPITALKEETEEEVQETRL. The span at 1451–1463 shows a compositional bias: basic residues; the sequence is LFPRRNSSKHKSR. Residues 1472–1482 show a composition bias toward acidic residues; the sequence is ETEEEVQETRL. Residues 1480–1482 carry the PDZ-binding motif; sequence TRL.

This sequence belongs to the ABC transporter superfamily. ABCC family. CFTR transporter (TC 3.A.1.202) subfamily. In terms of assembly, monomer; does not require oligomerization for channel activity. May form oligomers in the membrane. Interacts with SLC26A3, SLC26A6 and NHERF1. Interacts with SHANK2. Interacts with MYO6. Interacts (via C-terminus) with GOPC (via PDZ domain); this promotes CFTR internalization and thereby decreases channel activity. Interacts with SLC4A7 through NHERF1. Found in a complex with MYO5B and RAB11A. Interacts with ANO1. Interacts with SLC26A8. Interacts with AHCYL1; the interaction increases CFTR activity. Interacts with CSE1L. The core-glycosylated form interacts with GORASP2 (via PDZ GRASP-type 1 domain) in respone to ER stress. Interacts with MARCHF2; the interaction leads to CFTR ubiqtuitination and degradation. Interacts with ADGRG2. Post-translationally, N-glycosylated. Phosphorylated; cAMP treatment promotes phosphorylation and activates the channel. Dephosphorylation decreases the ATPase activity (in vitro). Phosphorylation at PKA sites activates the channel. Phosphorylation at PKC sites enhances the response to phosphorylation by PKA. Phosphorylated by AMPK; this inhibits channel activity. In terms of processing, ubiquitinated, leading to its degradation in the lysosome. Deubiquitination by USP10 in early endosomes enhances its endocytic recycling to the cell membrane. Ubiquitinated by RNF185 during ER stress. Ubiquitinated by MARCHF2.

The protein localises to the apical cell membrane. The protein resides in the early endosome membrane. It is found in the cell membrane. Its subcellular location is the recycling endosome membrane. It localises to the endoplasmic reticulum membrane. The protein localises to the nucleus. It carries out the reaction ATP + H2O + closed Cl(-) channel = ADP + phosphate + open Cl(-) channel.. The catalysed reaction is chloride(in) = chloride(out). It catalyses the reaction hydrogencarbonate(in) = hydrogencarbonate(out). The enzyme catalyses ATP + H2O = ADP + phosphate + H(+). Epithelial ion channel that plays an important role in the regulation of epithelial ion and water transport and fluid homeostasis. Mediates the transport of chloride ions across the cell membrane. Possesses an intrinsic ATPase activity and utilizes ATP to gate its channel; the passive flow of anions through the channel is gated by cycles of ATP binding and hydrolysis by the ATP-binding domains. The ion channel is also permeable to HCO(3)(-); selectivity depends on the extracellular chloride concentration. Exerts its function also by modulating the activity of other ion channels and transporters. Contributes to the regulation of the pH and the ion content of the epithelial fluid layer. Modulates the activity of the epithelial sodium channel (ENaC) complex, in part by regulating the cell surface expression of the ENaC complex. May regulate bicarbonate secretion and salvage in epithelial cells by regulating the transporter SLC4A7. Can inhibit the chloride channel activity of ANO1. Plays a role in the chloride and bicarbonate homeostasis during sperm epididymal maturation and capacitation. The protein is Cystic fibrosis transmembrane conductance regulator of Otolemur garnettii (Small-eared galago).